Reading from the N-terminus, the 933-residue chain is Serine/threonine-protein kinase PknD (933 aa).

Positions 4–291 constitute a Protein kinase domain; it reads YDIIRMIGKG…ALKADIEQHL (288 aa). ATP-binding positions include 10 to 18 and Lys-33; that span reads IGKGGMGEV. The active-site Proton acceptor is Asp-138.

This sequence belongs to the protein kinase superfamily. Ser/Thr protein kinase family. Autophosphorylated on serine and threonine residues.

The catalysed reaction is L-seryl-[protein] + ATP = O-phospho-L-seryl-[protein] + ADP + H(+). The enzyme catalyses L-threonyl-[protein] + ATP = O-phospho-L-threonyl-[protein] + ADP + H(+). Its function is as follows. Together with the serine/threonine kinase Pkn1, may play a role in the specific interactions with host proteins during intracellular growth. The polypeptide is Serine/threonine-protein kinase PknD (Chlamydia abortus (strain DSM 27085 / S26/3) (Chlamydophila abortus)).